A 92-amino-acid polypeptide reads, in one-letter code: Small ribosomal subunit protein uS19c (92 aa).

This sequence belongs to the universal ribosomal protein uS19 family.

The protein localises to the plastid. The protein resides in the chloroplast. In terms of biological role, protein S19 forms a complex with S13 that binds strongly to the 16S ribosomal RNA. The polypeptide is Small ribosomal subunit protein uS19c (Rhodomonas salina (Cryptomonas salina)).